Reading from the N-terminus, the 285-residue chain is Bifunctional protein FolD (285 aa).

NADP(+) is bound by residues 166 to 168 and I232; that span reads GAS.

It belongs to the tetrahydrofolate dehydrogenase/cyclohydrolase family. In terms of assembly, homodimer.

It carries out the reaction (6R)-5,10-methylene-5,6,7,8-tetrahydrofolate + NADP(+) = (6R)-5,10-methenyltetrahydrofolate + NADPH. It catalyses the reaction (6R)-5,10-methenyltetrahydrofolate + H2O = (6R)-10-formyltetrahydrofolate + H(+). Its pathway is one-carbon metabolism; tetrahydrofolate interconversion. In terms of biological role, catalyzes the oxidation of 5,10-methylenetetrahydrofolate to 5,10-methenyltetrahydrofolate and then the hydrolysis of 5,10-methenyltetrahydrofolate to 10-formyltetrahydrofolate. This is Bifunctional protein FolD from Pseudoalteromonas atlantica (strain T6c / ATCC BAA-1087).